The sequence spans 325 residues: Tetraacyldisaccharide 4'-kinase (325 aa).

58 to 65 (TVGGSGKT) lines the ATP pocket.

This sequence belongs to the LpxK family.

The catalysed reaction is a lipid A disaccharide + ATP = a lipid IVA + ADP + H(+). It participates in glycolipid biosynthesis; lipid IV(A) biosynthesis; lipid IV(A) from (3R)-3-hydroxytetradecanoyl-[acyl-carrier-protein] and UDP-N-acetyl-alpha-D-glucosamine: step 6/6. Transfers the gamma-phosphate of ATP to the 4'-position of a tetraacyldisaccharide 1-phosphate intermediate (termed DS-1-P) to form tetraacyldisaccharide 1,4'-bis-phosphate (lipid IVA). This is Tetraacyldisaccharide 4'-kinase from Coxiella burnetii (strain RSA 331 / Henzerling II).